The sequence spans 254 residues: Proline-rich protein 23A3 (254 aa).

3 disordered regions span residues 1-50 (MLRT…LEAP), 161-196 (ASPP…GAEQ), and 212-254 (PFPG…LVYE). Residues 35-50 (EPACPEPLAQPELEAP) are compositionally biased toward low complexity. Residues 214 to 241 (PGSPLQPLPPSPSRNPQEQLPPCPPCSP) show a composition bias toward pro residues. Positions 243–254 (APRRARKRLVYE) are enriched in basic residues.

It belongs to the PRR23 family.

This chain is Proline-rich protein 23A3, found in Mus musculus (Mouse).